We begin with the raw amino-acid sequence, 403 residues long: cAMP-dependent protein kinase regulatory subunit (403 aa).

A dimerization and phosphorylation region spans residues 1-155; the sequence is MADYTIPSEL…RIQASIGNNF (155 aa). A disordered region spans residues 79–125; sequence YAYSTDDGFGTEDDDDDDDDEDDEAAIPPPVVNRGRRTSVSAESMAP. The segment covering 87-103 has biased composition (acidic residues); that stretch reads FGTEDDDDDDDDEDDEA. Phosphoserine is present on S117. Residues 156-278, E226, R235, 279-403, E349, and R358 contribute to the 3',5'-cyclic AMP site; these read LFRN…EEVP and LLSS…PGEH.

This sequence belongs to the cAMP-dependent kinase regulatory chain family. Tetramer, composed of 2 regulatory (R) and 2 catalytic (C) subunits. In the presence of cAMP it dissociates into 2 active monomeric C subunits and an R dimer that binds four cAMP molecules.

The protein is cAMP-dependent protein kinase regulatory subunit (PKAR) of Blastocladiella emersonii (Aquatic fungus).